Here is a 302-residue protein sequence, read N- to C-terminus: HPr kinase/phosphorylase (302 aa).

Catalysis depends on residues His-136 and Lys-157. Residue 151 to 158 (GESGIGKS) coordinates ATP. Residue Ser-158 coordinates Mg(2+). Catalysis depends on Asp-175, which acts as the Proton acceptor; for phosphorylation activity. Proton donor; for dephosphorylation activity. Residues 198–207 (LEVRGLGIID) form an important for the catalytic mechanism of both phosphorylation and dephosphorylation region. Glu-199 is a Mg(2+) binding site. Arg-240 is a catalytic residue. Positions 261-266 (PIRPGR) are important for the catalytic mechanism of dephosphorylation.

This sequence belongs to the HPrK/P family. In terms of assembly, homohexamer. It depends on Mg(2+) as a cofactor.

It catalyses the reaction [HPr protein]-L-serine + ATP = [HPr protein]-O-phospho-L-serine + ADP + H(+). The enzyme catalyses [HPr protein]-O-phospho-L-serine + phosphate + H(+) = [HPr protein]-L-serine + diphosphate. In terms of biological role, catalyzes the ATP- as well as the pyrophosphate-dependent phosphorylation of a specific serine residue in HPr, a phosphocarrier protein of the phosphoenolpyruvate-dependent sugar phosphotransferase system (PTS). HprK/P also catalyzes the pyrophosphate-producing, inorganic phosphate-dependent dephosphorylation (phosphorolysis) of seryl-phosphorylated HPr (P-Ser-HPr). The two antagonistic activities of HprK/P are regulated by several intracellular metabolites, which change their concentration in response to the absence or presence of rapidly metabolisable carbon sources (glucose, fructose, etc.) in the growth medium. Therefore, by controlling the phosphorylation state of HPr, HPrK/P is a sensor enzyme that plays a major role in the regulation of carbon metabolism and sugar transport: it mediates carbon catabolite repression (CCR), and regulates PTS-catalyzed carbohydrate uptake and inducer exclusion. This Clostridium beijerinckii (strain ATCC 51743 / NCIMB 8052) (Clostridium acetobutylicum) protein is HPr kinase/phosphorylase.